The following is a 90-amino-acid chain: uncharacterized protein (90 aa).

The stretch at 36–82 forms a coiled coil; sequence DQEYSDAQMQLEDAVNALNKLWLSSNDQQREQLYRMRLQLQSLQNNM.

This is an uncharacterized protein from Bacillus subtilis (strain 168).